Consider the following 145-residue polypeptide: Prefoldin subunit alpha (145 aa).

The protein belongs to the prefoldin alpha subunit family. As to quaternary structure, heterohexamer of two alpha and four beta subunits.

Its subcellular location is the cytoplasm. Its function is as follows. Molecular chaperone capable of stabilizing a range of proteins. Seems to fulfill an ATP-independent, HSP70-like function in archaeal de novo protein folding. This Nitrosopumilus maritimus (strain SCM1) protein is Prefoldin subunit alpha.